Reading from the N-terminus, the 35-residue chain is Photosystem II reaction center protein T (35 aa).

A helical transmembrane segment spans residues 3–23 (ALVYTFLLVGTLGIIFFAIFF).

This sequence belongs to the PsbT family. As to quaternary structure, PSII is composed of 1 copy each of membrane proteins PsbA, PsbB, PsbC, PsbD, PsbE, PsbF, PsbH, PsbI, PsbJ, PsbK, PsbL, PsbM, PsbT, PsbY, PsbZ, Psb30/Ycf12, at least 3 peripheral proteins of the oxygen-evolving complex and a large number of cofactors. It forms dimeric complexes.

It is found in the plastid. The protein localises to the chloroplast thylakoid membrane. Functionally, found at the monomer-monomer interface of the photosystem II (PS II) dimer, plays a role in assembly and dimerization of PSII. PSII is a light-driven water plastoquinone oxidoreductase, using light energy to abstract electrons from H(2)O, generating a proton gradient subsequently used for ATP formation. This chain is Photosystem II reaction center protein T, found in Chara vulgaris (Common stonewort).